The chain runs to 292 residues: Bifunctional protein FolD (292 aa).

NADP(+) is bound by residues 169-171, Thr196, and Val237; that span reads GRG.

It belongs to the tetrahydrofolate dehydrogenase/cyclohydrolase family. In terms of assembly, homodimer.

It carries out the reaction (6R)-5,10-methylene-5,6,7,8-tetrahydrofolate + NADP(+) = (6R)-5,10-methenyltetrahydrofolate + NADPH. It catalyses the reaction (6R)-5,10-methenyltetrahydrofolate + H2O = (6R)-10-formyltetrahydrofolate + H(+). It participates in one-carbon metabolism; tetrahydrofolate interconversion. Catalyzes the oxidation of 5,10-methylenetetrahydrofolate to 5,10-methenyltetrahydrofolate and then the hydrolysis of 5,10-methenyltetrahydrofolate to 10-formyltetrahydrofolate. The polypeptide is Bifunctional protein FolD (Bifidobacterium longum (strain NCC 2705)).